The sequence spans 169 residues: Nucleoside diphosphate kinase 3-A (169 aa).

The ADP site is built by lysine 29, arginine 105, threonine 111, arginine 122, valine 129, and asparagine 132. Histidine 135 serves as the catalytic Pros-phosphohistidine intermediate.

It belongs to the NDK family. Homohexamer. Mg(2+) is required as a cofactor.

It localises to the mitochondrion outer membrane. It is found in the cytoplasm. The protein resides in the cytoskeleton. Its subcellular location is the cilium basal body. It carries out the reaction a 2'-deoxyribonucleoside 5'-diphosphate + ATP = a 2'-deoxyribonucleoside 5'-triphosphate + ADP. The enzyme catalyses a ribonucleoside 5'-diphosphate + ATP = a ribonucleoside 5'-triphosphate + ADP. In terms of biological role, catalyzes the phosphorylation of ribonucleosides and deoxyribonucleoside diphosphates, other than ATP, into the corresponding triphosphates with ATP as the major phosphate donor. The ATP gamma phosphate is transferred to the nucleoside diphosphate beta phosphate via a ping-pong mechanism, using a phosphorylated active-site intermediate. Through the catalyzed exchange of gamma-phosphate between di- and triphosphonucleosides participates in regulation of intracellular nucleotide homeostasis. Required for ciliary function during renal development. Its function is as follows. Independently of its kinase activity, facilitates mitochondrial tethering prior to membrane fusion through its direct membrane-binding and hexamerization. Implicated in repair of both single- and double-stranded breaks in DNA, independently of its kinase activity. The sequence is that of Nucleoside diphosphate kinase 3-A from Xenopus laevis (African clawed frog).